The following is a 295-amino-acid chain: Bifunctional protein FolD (295 aa).

NADP(+) contacts are provided by residues 165–167, S192, and I233; that span reads GRG.

This sequence belongs to the tetrahydrofolate dehydrogenase/cyclohydrolase family. As to quaternary structure, homodimer.

The catalysed reaction is (6R)-5,10-methylene-5,6,7,8-tetrahydrofolate + NADP(+) = (6R)-5,10-methenyltetrahydrofolate + NADPH. It catalyses the reaction (6R)-5,10-methenyltetrahydrofolate + H2O = (6R)-10-formyltetrahydrofolate + H(+). It functions in the pathway one-carbon metabolism; tetrahydrofolate interconversion. Functionally, catalyzes the oxidation of 5,10-methylenetetrahydrofolate to 5,10-methenyltetrahydrofolate and then the hydrolysis of 5,10-methenyltetrahydrofolate to 10-formyltetrahydrofolate. This Tropheryma whipplei (strain Twist) (Whipple's bacillus) protein is Bifunctional protein FolD.